A 311-amino-acid polypeptide reads, in one-letter code: Malate dehydrogenase (311 aa).

Residues 7 to 13 (GAAGGIG) and D34 contribute to the NAD(+) site. The substrate site is built by R81 and R87. NAD(+) contacts are provided by residues N94 and 117-119 (ITN). N119 and R153 together coordinate substrate. The Proton acceptor role is filled by H177. M227 is an NAD(+) binding site.

This sequence belongs to the LDH/MDH superfamily. MDH type 1 family. In terms of assembly, homodimer.

The enzyme catalyses (S)-malate + NAD(+) = oxaloacetate + NADH + H(+). Its function is as follows. Catalyzes the reversible oxidation of malate to oxaloacetate. This is Malate dehydrogenase from Vibrio campbellii (strain ATCC BAA-1116).